A 241-amino-acid chain; its full sequence is Putative hydrolase 080R (241 aa).

The 192-residue stretch at F50–L241 folds into the Nudix hydrolase domain. A Nudix box motif is present at residues G136–T157. Mg(2+) contacts are provided by E151, E155, and D204.

It belongs to the Nudix hydrolase family.

This is Putative hydrolase 080R from Aedes vexans (Inland floodwater mosquito).